Reading from the N-terminus, the 289-residue chain is Iron-sulfur cluster carrier protein (289 aa).

Residues 1–18 (MAEECSGNCDSCGSSSDC) are compositionally biased toward low complexity. The tract at residues 1–20 (MAEECSGNCDSCGSSSDCSD) is disordered. Residue 48–55 (GKGGVGKS) coordinates ATP.

This sequence belongs to the Mrp/NBP35 ATP-binding proteins family. In terms of assembly, homodimer.

In terms of biological role, binds and transfers iron-sulfur (Fe-S) clusters to target apoproteins. Can hydrolyze ATP. The protein is Iron-sulfur cluster carrier protein of Methanococcus maripaludis (strain DSM 14266 / JCM 13030 / NBRC 101832 / S2 / LL).